The chain runs to 270 residues: 23S rRNA (adenosine(1067)-2'-O)-methyltransferase (270 aa).

Residues Arg-135, Arg-165, Gly-218, Ile-238, and Leu-247 each coordinate S-adenosyl-L-methionine.

It belongs to the class IV-like SAM-binding methyltransferase superfamily. RNA methyltransferase TsnR/AvirB family.

It carries out the reaction adenosine(1067) in 23S rRNA + S-adenosyl-L-methionine = 2'-O-methyladenosine(1067) in 23S rRNA + S-adenosyl-L-homocysteine + H(+). In terms of biological role, specifically methylates the adenosine-1067 in 23S ribosomal RNA. Confers resistance to antibiotic thiostrepton. This chain is 23S rRNA (adenosine(1067)-2'-O)-methyltransferase, found in Streptomyces laurentii.